The primary structure comprises 145 residues: uncharacterized protein (145 aa).

The signal sequence occupies residues 1 to 22; it reads MLTRLVLSAHLSSTTSPPWTHA. Asn-98 carries N-linked (GlcNAc...) asparagine glycosylation. Positions 103–145 are disordered; the sequence is SSGQQRQAARQEEENSICKAHDSREGRLGYPLSAHQPGSGGPN.

The protein localises to the secreted. This is an uncharacterized protein from Homo sapiens (Human).